Consider the following 943-residue polypeptide: PAX-interacting protein 1 (943 aa).

BRCT domains lie at 8–93 and 94–182; these read VPEE…GFSP and ESGQ…LYHP. Disordered regions lie at residues 190-281, 400-507, and 620-641; these read PEEE…RRLQ, AQQQ…QQMR, and QQHL…PHQT. Positions 198–214 are enriched in basic and acidic residues; the sequence is ENERSSRSEGSYSDRRS. Positions 220–230 are enriched in low complexity; the sequence is SSPTSSRDASP. The segment covering 620–635 has biased composition (low complexity); it reads QQHLQNQQPLQHQNQQ. BRCT domains are found at residues 664–756 and 763–851; these read PEEG…RTLH and PGAK…IQHS. Positions 730–747 match the Nuclear localization signal motif; that stretch reads GKRCVTAHWLNTVLKKKK.

As to quaternary structure, interacts with smad2 via its last three BRCT domain-containing regions in an activin signal-dependent manner.

It is found in the nucleus. Its function is as follows. Involved in DNA damage response. May function as transcriptional cofactor in TGF beta signaling. Accentuates Smad2-dependent transcription. The protein is PAX-interacting protein 1 (paxip1) of Danio rerio (Zebrafish).